We begin with the raw amino-acid sequence, 195 residues long: Protein GrpE (195 aa).

It belongs to the GrpE family. As to quaternary structure, homodimer.

It is found in the cytoplasm. In terms of biological role, participates actively in the response to hyperosmotic and heat shock by preventing the aggregation of stress-denatured proteins, in association with DnaK and GrpE. It is the nucleotide exchange factor for DnaK and may function as a thermosensor. Unfolded proteins bind initially to DnaJ; upon interaction with the DnaJ-bound protein, DnaK hydrolyzes its bound ATP, resulting in the formation of a stable complex. GrpE releases ADP from DnaK; ATP binding to DnaK triggers the release of the substrate protein, thus completing the reaction cycle. Several rounds of ATP-dependent interactions between DnaJ, DnaK and GrpE are required for fully efficient folding. In Blochmanniella floridana, this protein is Protein GrpE.